The chain runs to 716 residues: Fatty acid oxidation complex subunit alpha (716 aa).

Residues 1–189 are enoyl-CoA hydratase/isomerase; it reads MIYQSPTIQV…KVGAVDAVVA (189 aa). D296 contributes to the substrate binding site. The interval 311–716 is 3-hydroxyacyl-CoA dehydrogenase; it reads KEVNNAAVLG…AANNGSYYQA (406 aa). Residues M324, D343, 400–402, K407, and S429 each bind NAD(+); that span reads VVE. Catalysis depends on H450, which acts as the For 3-hydroxyacyl-CoA dehydrogenase activity. N453 is an NAD(+) binding site. The substrate site is built by N500 and Y660.

This sequence in the N-terminal section; belongs to the enoyl-CoA hydratase/isomerase family. In the C-terminal section; belongs to the 3-hydroxyacyl-CoA dehydrogenase family. Heterotetramer of two alpha chains (FadB) and two beta chains (FadA).

The enzyme catalyses a (3S)-3-hydroxyacyl-CoA + NAD(+) = a 3-oxoacyl-CoA + NADH + H(+). It carries out the reaction a (3S)-3-hydroxyacyl-CoA = a (2E)-enoyl-CoA + H2O. It catalyses the reaction a 4-saturated-(3S)-3-hydroxyacyl-CoA = a (3E)-enoyl-CoA + H2O. The catalysed reaction is (3S)-3-hydroxybutanoyl-CoA = (3R)-3-hydroxybutanoyl-CoA. The enzyme catalyses a (3Z)-enoyl-CoA = a 4-saturated (2E)-enoyl-CoA. It carries out the reaction a (3E)-enoyl-CoA = a 4-saturated (2E)-enoyl-CoA. Its pathway is lipid metabolism; fatty acid beta-oxidation. Functionally, involved in the aerobic and anaerobic degradation of long-chain fatty acids via beta-oxidation cycle. Catalyzes the formation of 3-oxoacyl-CoA from enoyl-CoA via L-3-hydroxyacyl-CoA. It can also use D-3-hydroxyacyl-CoA and cis-3-enoyl-CoA as substrate. This is Fatty acid oxidation complex subunit alpha from Shewanella baltica (strain OS155 / ATCC BAA-1091).